The following is a 71-amino-acid chain: BBSome-interacting protein 1 (71 aa).

It belongs to the BBIP10 family.

The protein localises to the cell projection. It localises to the cilium. Its subcellular location is the cytoplasm. In terms of biological role, required for primary cilia assembly. This Nematostella vectensis (Starlet sea anemone) protein is BBSome-interacting protein 1 (bbip1).